Here is a 398-residue protein sequence, read N- to C-terminus: tRNA-specific 2-thiouridylase MnmA (398 aa).

ATP contacts are provided by residues 20-27 (AMSGGVDS) and leucine 46. Residue cysteine 114 is the Nucleophile of the active site. An intrachain disulfide couples cysteine 114 to cysteine 210. Residue glycine 138 coordinates ATP. The segment at 160 to 162 (RDQ) is interaction with tRNA. Cysteine 210 (cysteine persulfide intermediate) is an active-site residue.

It belongs to the MnmA/TRMU family.

It localises to the cytoplasm. The catalysed reaction is S-sulfanyl-L-cysteinyl-[protein] + uridine(34) in tRNA + AH2 + ATP = 2-thiouridine(34) in tRNA + L-cysteinyl-[protein] + A + AMP + diphosphate + H(+). Its function is as follows. Catalyzes the 2-thiolation of uridine at the wobble position (U34) of tRNA, leading to the formation of s(2)U34. This Brucella abortus (strain S19) protein is tRNA-specific 2-thiouridylase MnmA.